The chain runs to 375 residues: DNA replication and repair protein RecF (375 aa).

ATP is bound at residue glycine 30–threonine 37.

The protein belongs to the RecF family.

The protein resides in the cytoplasm. Its function is as follows. The RecF protein is involved in DNA metabolism; it is required for DNA replication and normal SOS inducibility. RecF binds preferentially to single-stranded, linear DNA. It also seems to bind ATP. The chain is DNA replication and repair protein RecF from Bacillus thuringiensis (strain Al Hakam).